We begin with the raw amino-acid sequence, 272 residues long: MGRVRNRATAQRRRRKRPGDPPAACAAIAVTGASRAQCPRVQVGVGSHAAAKRWLGRWRRKRRWRRVRKAGPRDLLPSAPTPDPPGPAPSPKDLDLGAQRERWETFRKLRGLSCEGAAKVLLDTFEYPGLVHHTGGCHCGAVRFAVWAPADLRVVDCSCRLCRKKQHRHFLVPASRFTLLQGAESIVTYRSNTHPALHSFCSRCGVQSFHAAVSDPRVYGVAPHCLDEGTVRSVVIEEVGGGDPGEEAAEEHKAIHKTSSQSAPACPREQEQ.

A compositionally biased stretch (basic residues) spans 1–17 (MGRVRNRATAQRRRRKR). Disordered stretches follow at residues 1-23 (MGRV…DPPA) and 65-95 (RRVR…KDLD). The span at 79-90 (APTPDPPGPAPS) shows a compositional bias: pro residues. Positions 133–246 (HTGGCHCGAV…EEVGGGDPGE (114 aa)) constitute a CENP-V/GFA domain. Zn(2+)-binding residues include Cys137, Cys139, Cys157, Cys159, Cys162, Cys201, and Cys204. The interval 240–272 (GGGDPGEEAAEEHKAIHKTSSQSAPACPREQEQ) is disordered.

The protein belongs to the Gfa family. It depends on Zn(2+) as a cofactor.

The polypeptide is Centromere protein V-like protein 1 (Homo sapiens (Human)).